Reading from the N-terminus, the 219-residue chain is Glutathione S-transferase 3 (219 aa).

The GST N-terminal domain occupies 3–82 (DEVVLLDTWA…YIDEVWNDKS (80 aa)). Glutathione-binding positions include S13, I54, and 66-67 (ES). Residues 88–216 (DPYKRSQARF…GLIVELQKTL (129 aa)) form the GST C-terminal domain.

Belongs to the GST superfamily. HSP26 family. As to quaternary structure, homodimer. degradation; (R)-lactate from methylglyoxal: step 1/2.

The catalysed reaction is RX + glutathione = an S-substituted glutathione + a halide anion + H(+). Functionally, conjugation of reduced glutathione to a wide number of exogenous and endogenous hydrophobic electrophiles. Involved in the detoxification of certain herbicides. This is Glutathione S-transferase 3 (GST3) from Glycine max (Soybean).